A 507-amino-acid chain; its full sequence is Interleukin-17 receptor E-like protein (507 aa).

The signal sequence occupies residues 1–21 (MLAGQALAFLGLTWGTFQSLA).

The protein resides in the secreted. This is Interleukin-17 receptor E-like protein from Homo sapiens (Human).